Reading from the N-terminus, the 473-residue chain is Glutamine synthetase (473 aa).

The region spanning 15-100 (ENIKIIDLKF…ICSIKEPRTG (86 aa)) is the GS beta-grasp domain. Positions 107 to 473 (PRTIAAKAVE…PYEFSLYYDC (367 aa)) constitute a GS catalytic domain. A Mn(2+)-binding site is contributed by E132. E134 contributes to the Mg(2+) binding site. E210 is a binding site for ATP. Mg(2+) contacts are provided by E215 and E223. Residues 267-268 (NG) and G268 each bind L-glutamate. Residue H272 coordinates Mg(2+). Residues 274 to 276 (HQS) and S276 contribute to the ATP site. L-glutamate is bound by residues R324, E330, and R342. ATP-binding residues include R342, R347, and K356. E361 contacts Mn(2+). R363 contributes to the L-glutamate binding site. The residue at position 401 (Y401) is an O-AMP-tyrosine.

It belongs to the glutamine synthetase family. As to quaternary structure, oligomer of 12 subunits arranged in the form of two hexagons. Mg(2+) is required as a cofactor.

Its subcellular location is the cytoplasm. It catalyses the reaction L-glutamate + NH4(+) + ATP = L-glutamine + ADP + phosphate + H(+). With respect to regulation, inhibited by ADP (90%), AMP (80%), alanine (52%) and aspartate (41%). The activity of this enzyme could be controlled by adenylation under conditions of abundant glutamine. Involved in nitrogen metabolism via ammonium assimilation. Catalyzes the ATP-dependent biosynthesis of glutamine from glutamate and ammonia. The protein is Glutamine synthetase of Synechocystis sp. (strain ATCC 27184 / PCC 6803 / Kazusa).